A 1194-amino-acid chain; its full sequence is UPF0507 protein PICST_55861 (1194 aa).

The VPS9 domain occupies 324–475 (QSYDPEAVKF…LSSSLSDELS (152 aa)).

The protein belongs to the UPF0507 family.

This is UPF0507 protein PICST_55861 from Scheffersomyces stipitis (strain ATCC 58785 / CBS 6054 / NBRC 10063 / NRRL Y-11545) (Yeast).